The chain runs to 213 residues: High frequency lysogenization protein HflD (213 aa).

Residues 79–126 (QGLNAELTRYTLSLMVLERKLSSAKGALDTLGNRINGLQRQLEHFDLQ) adopt a coiled-coil conformation.

It belongs to the HflD family. As to quaternary structure, interacts with CII protein from phage lambda.

The protein localises to the cytoplasm. It is found in the cell inner membrane. Its function is as follows. Negative regulator of phage lambda lysogenization. Contributes to the degradation of the phage regulatory protein CII. Acts probably by holding CII on the membrane surface, away from the target promoters, but close to the FtsH protease. This Escherichia coli O127:H6 (strain E2348/69 / EPEC) protein is High frequency lysogenization protein HflD.